A 565-amino-acid chain; its full sequence is DNA repair protein RAD7 (565 aa).

2 disordered regions span residues 1 to 22 (MYRS…PNSA) and 41 to 68 (WYQR…FTAE). Residues 1-200 (MYRSRNRPKR…SKLVFNKLRD (200 aa)) are hydrophilic. Residues 47–62 (KKQEDATDEKKGKAED) show a composition bias toward basic and acidic residues. 2 positions are modified to phosphoserine: S64 and S85. The disordered stretch occupies residues 105–137 (ADSDEEEYETSHISDTPVSLSSANDRESLTKKR). Residues 115-127 (SHISDTPVSLSSA) are compositionally biased toward polar residues.

It to S.pombe SpCC613.14. In terms of assembly, component of the global genome repair (GGR) complex composed of at least ABF1, RAD7 and RAD16. Interacts with ELC1.

Functionally, component of the global genome repair (GGR) complex which promotes global genome nucleotide excision repair (GG-NER) which removes DNA damage from nontranscribing DNA. This protein is one of 10 proteins (RAD1, 2,3,4,7,10,14, 16,23 and MMS19) involved in excision repair of DNA damaged with UV light, bulky adducts, or cross-linking agents. The sequence is that of DNA repair protein RAD7 (RAD7) from Saccharomyces cerevisiae (strain ATCC 204508 / S288c) (Baker's yeast).